Reading from the N-terminus, the 594-residue chain is Protein FAM200C (594 aa).

This is Protein FAM200C from Homo sapiens (Human).